The following is a 401-amino-acid chain: Adenylosuccinate synthetase (401 aa).

GTP contacts are provided by residues 11-17 (GDEGKGK) and 39-41 (GHT). The Proton acceptor role is filled by Asp-12. Residues Asp-12 and Gly-39 each contribute to the Mg(2+) site. IMP-binding positions include 12–15 (DEGK), 37–40 (NAGH), Thr-127, Arg-141, Gln-212, Thr-227, and Arg-290. His-40 (proton donor) is an active-site residue. 286–292 (ATTGRPR) contacts substrate. GTP contacts are provided by residues Arg-292, 318 to 320 (KGD), and 390 to 392 (SVG).

It belongs to the adenylosuccinate synthetase family. As to quaternary structure, homodimer. Mg(2+) serves as cofactor.

It localises to the cytoplasm. It carries out the reaction IMP + L-aspartate + GTP = N(6)-(1,2-dicarboxyethyl)-AMP + GDP + phosphate + 2 H(+). It participates in purine metabolism; AMP biosynthesis via de novo pathway; AMP from IMP: step 1/2. Plays an important role in the de novo pathway of purine nucleotide biosynthesis. Catalyzes the first committed step in the biosynthesis of AMP from IMP. This Thermosipho africanus (strain TCF52B) protein is Adenylosuccinate synthetase.